The following is a 392-amino-acid chain: MLRWLTAGESHGPALVAVLEGLPAGVEITTSVLGDALARRRMGYGRGARMTFERDEVEFLGGIRHGVTMGGPVAIRIANTEWPKWREVMAADPVPPEQLADLARAAPLTRPRPGHADLVGMQKYHLTDIRPILERASARETAARVALGTVAAAFLRQAAGIEVLSHVVAIGPVCAPAEPLPTPADRERIDADPVRCLDPQASAAMVAEIDAAKKDGDTLGGVVEVLGYGLPPGLGSHVHWDRRLDARLAAALMSIQAIKGVEVGDGFATARRRGSAAHDEIEAGADGVRRRTNRSGGTEGGMSTGEVLRVRAAMKPISTVPRALDTIDVTTGEPAKAINQRSDVCAVPAAGVVAEAMVELVLADALLEKFGGDHVVETRRNLQAYLDTLVVR.

Residues arginine 40 and arginine 46 each coordinate NADP(+). Residues 135 to 137 (RAS), 256 to 257 (QA), glycine 300, 315 to 319 (KPIST), and arginine 341 contribute to the FMN site.

This sequence belongs to the chorismate synthase family. As to quaternary structure, homotetramer. FMNH2 serves as cofactor.

The catalysed reaction is 5-O-(1-carboxyvinyl)-3-phosphoshikimate = chorismate + phosphate. It functions in the pathway metabolic intermediate biosynthesis; chorismate biosynthesis; chorismate from D-erythrose 4-phosphate and phosphoenolpyruvate: step 7/7. In terms of biological role, catalyzes the anti-1,4-elimination of the C-3 phosphate and the C-6 proR hydrogen from 5-enolpyruvylshikimate-3-phosphate (EPSP) to yield chorismate, which is the branch point compound that serves as the starting substrate for the three terminal pathways of aromatic amino acid biosynthesis. This reaction introduces a second double bond into the aromatic ring system. The polypeptide is Chorismate synthase (Acidothermus cellulolyticus (strain ATCC 43068 / DSM 8971 / 11B)).